We begin with the raw amino-acid sequence, 301 residues long: Probable 5-dehydro-4-deoxyglucarate dehydratase (301 aa).

This sequence belongs to the DapA family.

The catalysed reaction is 5-dehydro-4-deoxy-D-glucarate + H(+) = 2,5-dioxopentanoate + CO2 + H2O. It functions in the pathway carbohydrate acid metabolism; D-glucarate degradation; 2,5-dioxopentanoate from D-glucarate: step 2/2. This chain is Probable 5-dehydro-4-deoxyglucarate dehydratase, found in Chelativorans sp. (strain BNC1).